A 439-amino-acid chain; its full sequence is MNIGFISLGCSKNRVDTEVMMAALKKAGHRIVNSLERADLVVVNTCGFITPAKEESIEAIIETAELKKKGSLQFLIAAGCLSQRYGRELLLEIPELDGVFGISSVSSIAGVVNRIAQGERVCFTEATPTEYFEKGHRILTTPPGSAYLKISEGCNNSCSYCVIPSIRGKLRSRQINELLNEAAQLLKMGIKELVLVAQDTSAYGHDISPQSALPTLLRELSKLDGLEWIRLMYLHPLYLSDDIIDVVAYENKVLPYLDIPIQHASSKILKLMHRRHDNSHLRTMISKLRARIPNLTLRTTVMLGFPGEEEKDFAELYEFVAESQFDWLGAFSFVPEEGSKAALLPNQIEDEIKAERKDKILRLQQKITRQKNLARINTQEKVLISSQLSKNLFVGRTYFQAPEVDGLTLVKTDFKLTKGDFVDVQLVGVRNYDMIGEYQ.

Residues 1–117 (MNIGFISLGC…IAGVVNRIAQ (117 aa)) enclose the MTTase N-terminal domain. Residues cysteine 10, cysteine 46, cysteine 80, cysteine 154, cysteine 158, and cysteine 161 each coordinate [4Fe-4S] cluster. One can recognise a Radical SAM core domain in the interval 140–370 (TTPPGSAYLK…LRLQQKITRQ (231 aa)). In terms of domain architecture, TRAM spans 373 to 439 (LARINTQEKV…RNYDMIGEYQ (67 aa)).

This sequence belongs to the methylthiotransferase family. RimO subfamily. It depends on [4Fe-4S] cluster as a cofactor.

Its subcellular location is the cytoplasm. It catalyses the reaction L-aspartate(89)-[ribosomal protein uS12]-hydrogen + (sulfur carrier)-SH + AH2 + 2 S-adenosyl-L-methionine = 3-methylsulfanyl-L-aspartate(89)-[ribosomal protein uS12]-hydrogen + (sulfur carrier)-H + 5'-deoxyadenosine + L-methionine + A + S-adenosyl-L-homocysteine + 2 H(+). In terms of biological role, catalyzes the methylthiolation of an aspartic acid residue of ribosomal protein uS12. The chain is Ribosomal protein uS12 methylthiotransferase RimO from Syntrophomonas wolfei subsp. wolfei (strain DSM 2245B / Goettingen).